The sequence spans 265 residues: 5'-nucleotidase SurE (265 aa).

The a divalent metal cation site is built by Asp-12, Asp-13, Ser-43, and Asn-91.

This sequence belongs to the SurE nucleotidase family. Requires a divalent metal cation as cofactor.

It is found in the cytoplasm. The catalysed reaction is a ribonucleoside 5'-phosphate + H2O = a ribonucleoside + phosphate. Its function is as follows. Nucleotidase that shows phosphatase activity on nucleoside 5'-monophosphates. The sequence is that of 5'-nucleotidase SurE from Haloquadratum walsbyi (strain DSM 16790 / HBSQ001).